Reading from the N-terminus, the 511-residue chain is Probable cytochrome P450 4ac2 (511 aa).

Residues E318 and C455 each coordinate heme.

It belongs to the cytochrome P450 family. Heme is required as a cofactor.

The protein resides in the endoplasmic reticulum membrane. The protein localises to the microsome membrane. May be involved in the metabolism of insect hormones and in the breakdown of synthetic insecticides. This chain is Probable cytochrome P450 4ac2 (Cyp4ac2), found in Drosophila melanogaster (Fruit fly).